The primary structure comprises 299 residues: DNA-binding transcriptional repressor CapW (299 aa).

The tract at residues 1–22 (MTDESKPTDDQPTSKGRQGARW) is disordered. Residues 1 to 95 (MTDESKPTDD…SFKAVFPSSA (95 aa)) form a winged HTH domain region. The tract at residues 96–207 (VERYLDDLLR…LTRIKCCKYV (112 aa)) is WYL domain. The WYL domain occupies 131-211 (GRRLNADIVG…KCCKYVGQDR (81 aa)). Residues 156-200 (YQSLTDPEGGERMLSPHALVHDGNRWHVRAYCHKRKAFRDFSLTR) are probable ligand-binding region. The tract at residues 208 to 299 (GQDRDRADED…RDEIKDLIQY (92 aa)) is WCX domain.

In terms of assembly, homodimer.

Its function is as follows. Transcriptional regulator of a CBASS antivirus system. CBASS (cyclic oligonucleotide-based antiphage signaling system) provides immunity against bacteriophage. The CD-NTase protein synthesizes cyclic nucleotides in response to infection; these serve as specific second messenger signals. The signals activate a diverse range of effectors, leading to bacterial cell death and thus abortive phage infection. A type III CBASS system, part of a Cap17-CapW-CdnC-Cap7-Cap6-Cap18 locus. Binds specifically to palindromes that overlap the -10 site in the promoter of cdnC, found between the genes for divergently transcribed capW and cdnC (cognate DNA). Probably represses transcription bidirectionally from the promoter. In Pseudomonas aeruginosa, this protein is DNA-binding transcriptional repressor CapW.